Here is a 156-residue protein sequence, read N- to C-terminus: Cyanate hydratase (156 aa).

Active-site residues include Arg-96, Glu-99, and Ser-122.

This sequence belongs to the cyanase family.

The catalysed reaction is cyanate + hydrogencarbonate + 3 H(+) = NH4(+) + 2 CO2. Catalyzes the reaction of cyanate with bicarbonate to produce ammonia and carbon dioxide. The polypeptide is Cyanate hydratase (Escherichia coli O9:H4 (strain HS)).